The primary structure comprises 128 residues: Profilin (128 aa).

The protein belongs to the profilin family.

More likely to influence phosphoinositide metabolism than actin assembly. This is Profilin from Homo sapiens (Human).